The sequence spans 312 residues: R2-like ligand binding oxidase (312 aa).

Positions 68, 101, and 104 each coordinate Mn(2+). The segment at residues 71-162 (VTQDIQPFMA…AAQVRASATY (92 aa)) is a cross-link (3-(O4'-tyrosyl)-valine (Val-Tyr)). Glu101 is a Fe cation binding site. Residues Glu167, Glu202, and His205 each coordinate Fe cation.

The protein belongs to the ribonucleoside diphosphate reductase small chain family. R2-like ligand binding oxidase subfamily. As to quaternary structure, homodimer. The cofactor is Fe cation. Requires Mn(2+) as cofactor.

In terms of biological role, probable oxidase that might be involved in lipid metabolism. The polypeptide is R2-like ligand binding oxidase (Mycobacterium sp. (strain JLS)).